A 559-amino-acid chain; its full sequence is U-box domain-containing protein 41 (559 aa).

Disordered stretches follow at residues 1–30 (MGGN…KHDE) and 121–156 (RMDK…SPSD). Residues 12 to 24 (HQRSSSATTTTLP) are compositionally biased toward polar residues. A U-box domain is found at 30-104 (ETPPEFLCPI…FSWCDRQKVD (75 aa)). 5 ARM repeats span residues 266–305 (EDLR…NLSL), 307–346 (KQNK…SLAL), 348–388 (DENK…HLSL), 390–427 (PSNR…NLAA), and 428–472 (CPDG…TLCQ).

It carries out the reaction S-ubiquitinyl-[E2 ubiquitin-conjugating enzyme]-L-cysteine + [acceptor protein]-L-lysine = [E2 ubiquitin-conjugating enzyme]-L-cysteine + N(6)-ubiquitinyl-[acceptor protein]-L-lysine.. Its pathway is protein modification; protein ubiquitination. Functions as an E3 ubiquitin ligase. The sequence is that of U-box domain-containing protein 41 (PUB41) from Arabidopsis thaliana (Mouse-ear cress).